The primary structure comprises 250 residues: MEKLEKLYEGKAKQLYATDDPEVLWVEYKNTATAGDGEKKEDFTGKGRLNNLITTIIFDLLKKRGIDSHLIKRVDDTGQLVRKVNMFPLEIVLRNVAAGHFCSRLGVEEGLPLKEPVLEYFLKNDDLHDPFVNDDDLVALGVCTREDLAEIAPLARKINEALIEIFAKIDVKLVDFKIEMGRATDGTLLLADEITPDSCRLWDQKDHSGKVEHLDKDLFRRGLGSIIPAYEEIEERLAELAKSEGIEVAE.

Belongs to the SAICAR synthetase family.

It carries out the reaction 5-amino-1-(5-phospho-D-ribosyl)imidazole-4-carboxylate + L-aspartate + ATP = (2S)-2-[5-amino-1-(5-phospho-beta-D-ribosyl)imidazole-4-carboxamido]succinate + ADP + phosphate + 2 H(+). It participates in purine metabolism; IMP biosynthesis via de novo pathway; 5-amino-1-(5-phospho-D-ribosyl)imidazole-4-carboxamide from 5-amino-1-(5-phospho-D-ribosyl)imidazole-4-carboxylate: step 1/2. In Bifidobacterium longum (strain DJO10A), this protein is Phosphoribosylaminoimidazole-succinocarboxamide synthase.